The primary structure comprises 91 residues: C-C motif chemokine 5 (91 aa).

A signal peptide spans 1-23; sequence MKVSAARLAVILVATALCAPASA. Disulfide bonds link C33/C57 and C34/C73.

The protein belongs to the intercrine beta (chemokine CC) family.

It is found in the secreted. Chemoattractant for blood monocytes, memory T-helper cells and eosinophils. Causes the release of histamine from basophils and activates eosinophils. May activate several chemokine receptors including CCR1, CCR3, CCR4 and CCR5. May also be an agonist of the G protein-coupled receptor GPR75. Together with GPR75, may play a role in neuron survival through activation of a downstream signaling pathway involving the PI3, Akt and MAP kinases. By activating GPR75 may also play a role in insulin secretion by islet cells. In Macaca mulatta (Rhesus macaque), this protein is C-C motif chemokine 5 (CCL5).